Here is a 120-residue protein sequence, read N- to C-terminus: NAD(P)H-quinone oxidoreductase subunit 3, chloroplastic (120 aa).

The next 3 membrane-spanning stretches (helical) occupy residues 9–29 (IFWT…SISG), 64–84 (MFAL…PWAM), and 88–108 (VLGV…VVGL).

This sequence belongs to the complex I subunit 3 family. As to quaternary structure, NDH is composed of at least 16 different subunits, 5 of which are encoded in the nucleus.

It is found in the plastid. It localises to the chloroplast thylakoid membrane. It catalyses the reaction a plastoquinone + NADH + (n+1) H(+)(in) = a plastoquinol + NAD(+) + n H(+)(out). The enzyme catalyses a plastoquinone + NADPH + (n+1) H(+)(in) = a plastoquinol + NADP(+) + n H(+)(out). In terms of biological role, NDH shuttles electrons from NAD(P)H:plastoquinone, via FMN and iron-sulfur (Fe-S) centers, to quinones in the photosynthetic chain and possibly in a chloroplast respiratory chain. The immediate electron acceptor for the enzyme in this species is believed to be plastoquinone. Couples the redox reaction to proton translocation, and thus conserves the redox energy in a proton gradient. This is NAD(P)H-quinone oxidoreductase subunit 3, chloroplastic from Hordeum vulgare (Barley).